The primary structure comprises 187 residues: Mast cell-expressed membrane protein 1 (187 aa).

Over 1–85 (MEVEEIYKHQ…PCWLYRAILS (85 aa)) the chain is Cytoplasmic. Residues 49 to 71 (DHAKGGHSRPTSQVPAQCRPPSD) form a disordered region. Residues 86–106 (LYILLALAFVLCIILSAFIMV) form a helical; Signal-anchor for type II membrane protein membrane-spanning segment. Topologically, residues 107-187 (KNAEMSKELL…LQKMPQSSPQ (81 aa)) are extracellular. Residue Asn124 is glycosylated (N-linked (GlcNAc...) asparagine).

As to expression, expressed specifically in mast cells. Found primarily in lung.

Its subcellular location is the membrane. This Homo sapiens (Human) protein is Mast cell-expressed membrane protein 1.